Here is a 408-residue protein sequence, read N- to C-terminus: 1-deoxy-D-xylulose 5-phosphate reductoisomerase (408 aa).

The NADPH site is built by threonine 27, glycine 28, serine 29, isoleucine 30, alanine 53, arginine 54, asparagine 55, and asparagine 140. Residue lysine 141 participates in 1-deoxy-D-xylulose 5-phosphate binding. Glutamate 142 is an NADPH binding site. Aspartate 166 contributes to the Mn(2+) binding site. 1-deoxy-D-xylulose 5-phosphate-binding residues include serine 167, glutamate 168, serine 192, and histidine 215. Glutamate 168 provides a ligand contact to Mn(2+). Glycine 221 serves as a coordination point for NADPH. 1-deoxy-D-xylulose 5-phosphate is bound by residues serine 228, asparagine 233, lysine 234, and glutamate 237. Residue glutamate 237 coordinates Mn(2+).

It belongs to the DXR family. The cofactor is Mg(2+). Mn(2+) is required as a cofactor.

It catalyses the reaction 2-C-methyl-D-erythritol 4-phosphate + NADP(+) = 1-deoxy-D-xylulose 5-phosphate + NADPH + H(+). It participates in isoprenoid biosynthesis; isopentenyl diphosphate biosynthesis via DXP pathway; isopentenyl diphosphate from 1-deoxy-D-xylulose 5-phosphate: step 1/6. In terms of biological role, catalyzes the NADPH-dependent rearrangement and reduction of 1-deoxy-D-xylulose-5-phosphate (DXP) to 2-C-methyl-D-erythritol 4-phosphate (MEP). In Nitratidesulfovibrio vulgaris (strain DP4) (Desulfovibrio vulgaris), this protein is 1-deoxy-D-xylulose 5-phosphate reductoisomerase.